The chain runs to 581 residues: Transcription activator GAGA (581 aa).

The 66-residue stretch at 34-99 folds into the BTB domain; sequence VDCTLAAGGR…VYRGEVSVDH (66 aa). The tract at residues 201–397 is interaction with E(bx); sequence VIQAFLPARK…SSGSGSGALS (197 aa). Thr237 carries the phosphothreonine modification. Disordered regions lie at residues 298–343 and 364–404; these read ITPA…EQPA and LRHF…SVPQ. A C2H2-type; degenerate zinc finger spans residues 343–366; it reads ATCPICYAVIRQSRNLRRHLELRH. The span at 381-401 shows a compositional bias: low complexity; sequence GKKSSSGSSGSGSGALSSSGS.

As to quaternary structure, interacts with Bin1, lolal, corto, ttk and ph-p. Interacts with FACT subunits Ssrp and dre4/SPT16. Interacts with E(bx). Upon ecdysone stimulation, interacts with Nup98. In terms of processing, the N-terminus is blocked. As to expression, expressed in the central nervous system throughout development.

The protein resides in the nucleus. Its subcellular location is the chromosome. Transcriptional activator that functions by regulating chromatin structure. Overcomes the repressive effects of chromatin by promoting the open chromatin conformation in promoter gene regions, thereby allowing access to other transcription factors. Binds to DNA Polycomb response elements (PREs) at the bithorax complex and to the proximal region of the engrailed promoter, and positively regulates transcription of many genes including homeotic ones. Involved in zygotic genome activation (ZGA), a critical event in early embryonic development during which the developmental control passes from maternally provided mRNAs to the expression of the zygotic genome after fertilization. Binds to the DNA sequence (GA)n, with optimal binding to the pentamer 5'-GAGAG-3'. Binds DNA as an oligomer. May also act as a transcriptional repressor, maintaining the repressed state of genes including lolal, and down-regulating its own transcription. Required for dosage compensation in males and may be involved in oogenesis. Also has a role in nuclear division. The protein is Transcription activator GAGA (Trl) of Drosophila melanogaster (Fruit fly).